Consider the following 226-residue polypeptide: 7-carboxy-7-deazaguanine synthase (226 aa).

Substrate-binding positions include 10-12 (LQG) and Arg-25. Positions 16–221 (YTGIPCIFVR…LQTHKFIWTP (206 aa)) constitute a Radical SAM core domain. Residues Cys-29, Cys-33, and Cys-36 each coordinate [4Fe-4S] cluster. Ser-38 contributes to the Mg(2+) binding site. Residue Thr-69 coordinates substrate. Gly-71 is an S-adenosyl-L-methionine binding site.

Belongs to the radical SAM superfamily. 7-carboxy-7-deazaguanine synthase family. As to quaternary structure, homodimer. It depends on [4Fe-4S] cluster as a cofactor. Requires S-adenosyl-L-methionine as cofactor. Mg(2+) serves as cofactor.

The enzyme catalyses 6-carboxy-5,6,7,8-tetrahydropterin + H(+) = 7-carboxy-7-deazaguanine + NH4(+). It participates in purine metabolism; 7-cyano-7-deazaguanine biosynthesis. Functionally, catalyzes the complex heterocyclic radical-mediated conversion of 6-carboxy-5,6,7,8-tetrahydropterin (CPH4) to 7-carboxy-7-deazaguanine (CDG), a step common to the biosynthetic pathways of all 7-deazapurine-containing compounds. The chain is 7-carboxy-7-deazaguanine synthase from Koribacter versatilis (strain Ellin345).